A 485-amino-acid chain; its full sequence is Adenylate kinase 8 (485 aa).

2 adenylate kinase regions span residues 58-258 and 269-472; these read PRVF…TFVL and PRIL…YTVS. 67–72 serves as a coordination point for ATP; the sequence is ASGKHT. Positions 87-113 are NMP 1; sequence TPESVLSSDVSLLAKEAQSYRDKGQEV. Residues 140 to 143 and Gln-147 each bind AMP; that span reads GFPK. The LID 1 stretch occupies residues 177–206; that stretch reads GKRIDTANGEVYHTTFDWPSDPTVQRNLVE. Arg-218 provides a ligand contact to AMP. Position 278–283 (278–283) interacts with ATP; the sequence is GSGRSL. The interval 298–327 is NMP 2; sequence CCGQVLKEAVADQTKLGEVIQPYIENDQQV. AMP-binding positions include 325-327, 354-357, and Gln-361; these read QQV and GFPR. The LID 2 stretch occupies residues 391–424; sequence LCMTDPVSGERYHDIYKPAPSSEVHERLQQNPRH. Arg-432 provides a ligand contact to AMP.

The protein belongs to the adenylate kinase family.

It is found in the cytoplasm. Its subcellular location is the cytosol. The enzyme catalyses AMP + ATP = 2 ADP. The catalysed reaction is a 2'-deoxyribonucleoside 5'-diphosphate + ATP = a 2'-deoxyribonucleoside 5'-triphosphate + ADP. It catalyses the reaction a ribonucleoside 5'-diphosphate + ATP = a ribonucleoside 5'-triphosphate + ADP. Functionally, nucleoside monophosphate (NMP) kinase that catalyzes the reversible transfer of the terminal phosphate group between nucleoside triphosphates and monophosphates. Has highest activity toward AMP, and weaker activity toward dAMP, CMP and dCMP. Also displays broad nucleoside diphosphate kinase activity. The chain is Adenylate kinase 8 (ak8) from Xenopus tropicalis (Western clawed frog).